The sequence spans 425 residues: Ribulose bisphosphate carboxylase (425 aa).

Lys153 serves as the catalytic Proton acceptor. Lys155 is a substrate binding site. 3 residues coordinate Mg(2+): Lys179, Asp181, and Glu182. At Lys179 the chain carries N6-carboxylysine. Catalysis depends on His269, which acts as the Proton acceptor. Substrate is bound by residues Arg270, His302, 353-355 (SGG), and 375-378 (QAGG).

This sequence belongs to the RuBisCO large chain family. Type III subfamily. Homodimer. In contrast to form I RuBisCO, the form III RuBisCO is composed solely of large subunits. It depends on Mg(2+) as a cofactor.

The enzyme catalyses 2 (2R)-3-phosphoglycerate + 2 H(+) = D-ribulose 1,5-bisphosphate + CO2 + H2O. It carries out the reaction D-ribulose 1,5-bisphosphate + O2 = 2-phosphoglycolate + (2R)-3-phosphoglycerate + 2 H(+). Reversibly inhibited by O(2). Its function is as follows. Catalyzes the addition of molecular CO(2) and H(2)O to ribulose 1,5-bisphosphate (RuBP), generating two molecules of 3-phosphoglycerate (3-PGA). Functions in an archaeal AMP degradation pathway, together with AMP phosphorylase and R15P isomerase. The chain is Ribulose bisphosphate carboxylase from Methanocaldococcus jannaschii (strain ATCC 43067 / DSM 2661 / JAL-1 / JCM 10045 / NBRC 100440) (Methanococcus jannaschii).